Consider the following 128-residue polypeptide: MGISKALRSLLILLLLNITFFFGHVTPGATVKPCPPPPAKQATTKCPRDTLKFGVCGSWLGLVSEVIGTPPSQECCSLIKGLADFEAAVCLCTALKTSILGVAPVKIPVALTLLLNSCGKNVPQGFVC.

An N-terminal signal peptide occupies residues 1–23; sequence MGISKALRSLLILLLLNITFFFG. 4 disulfide bridges follow: C34/C90, C46/C76, C56/C75, and C92/C128.

It belongs to the plant LTP family. PEARLI1 subfamily.

The protein localises to the secreted. The sequence is that of Putative lipid-binding protein At4g00165 from Arabidopsis thaliana (Mouse-ear cress).